A 97-amino-acid chain; its full sequence is ATP-dependent Clp protease adapter protein ClpS (97 aa).

This sequence belongs to the ClpS family. Binds to the N-terminal domain of the chaperone ClpA.

Its function is as follows. Involved in the modulation of the specificity of the ClpAP-mediated ATP-dependent protein degradation. The sequence is that of ATP-dependent Clp protease adapter protein ClpS from Nautilia profundicola (strain ATCC BAA-1463 / DSM 18972 / AmH).